The sequence spans 150 residues: Cytochrome c oxidase subunit 5A, mitochondrial (150 aa).

The transit peptide at 1–41 directs the protein to the mitochondrion; sequence MLGAALRRCAVAATTWAGPRGLLHSSRTPGPAAAIQSVRCY. The SIFI-degron signature appears at 2–17; sequence LGAALRRCAVAATTWA. Lys-87 and Lys-113 each carry N6-acetyllysine. A Phosphothreonine modification is found at Thr-141.

The protein belongs to the cytochrome c oxidase subunit 5A family. As to quaternary structure, component of the cytochrome c oxidase (complex IV, CIV), a multisubunit enzyme composed of 14 subunits. The complex is composed of a catalytic core of 3 subunits MT-CO1, MT-CO2 and MT-CO3, encoded in the mitochondrial DNA, and 11 supernumerary subunits COX4I, COX5A, COX5B, COX6A, COX6B, COX6C, COX7A, COX7B, COX7C, COX8 and NDUFA4, which are encoded in the nuclear genome. The complex exists as a monomer or a dimer and forms supercomplexes (SCs) in the inner mitochondrial membrane with NADH-ubiquinone oxidoreductase (complex I, CI) and ubiquinol-cytochrome c oxidoreductase (cytochrome b-c1 complex, complex III, CIII), resulting in different assemblies (supercomplex SCI(1)III(2)IV(1) and megacomplex MCI(2)III(2)IV(2)). Interacts with AFG1L. Interacts with RAB5IF. In response to mitochondrial stress, the precursor protein is ubiquitinated by the SIFI complex in the cytoplasm before mitochondrial import, leading to its degradation. Within the SIFI complex, UBR4 initiates ubiquitin chain that are further elongated or branched by KCMF1.

It localises to the mitochondrion inner membrane. It functions in the pathway energy metabolism; oxidative phosphorylation. Its function is as follows. Component of the cytochrome c oxidase, the last enzyme in the mitochondrial electron transport chain which drives oxidative phosphorylation. The respiratory chain contains 3 multisubunit complexes succinate dehydrogenase (complex II, CII), ubiquinol-cytochrome c oxidoreductase (cytochrome b-c1 complex, complex III, CIII) and cytochrome c oxidase (complex IV, CIV), that cooperate to transfer electrons derived from NADH and succinate to molecular oxygen, creating an electrochemical gradient over the inner membrane that drives transmembrane transport and the ATP synthase. Cytochrome c oxidase is the component of the respiratory chain that catalyzes the reduction of oxygen to water. Electrons originating from reduced cytochrome c in the intermembrane space (IMS) are transferred via the dinuclear copper A center (CU(A)) of subunit 2 and heme A of subunit 1 to the active site in subunit 1, a binuclear center (BNC) formed by heme A3 and copper B (CU(B)). The BNC reduces molecular oxygen to 2 water molecules using 4 electrons from cytochrome c in the IMS and 4 protons from the mitochondrial matrix. In Colobus guereza (Mantled guereza), this protein is Cytochrome c oxidase subunit 5A, mitochondrial (COX5A).